Reading from the N-terminus, the 444-residue chain is Tol-Pal system protein TolB (444 aa).

Positions 1–19 are cleaved as a signal peptide; the sequence is MRNIIYFILSLLFSVTSYA.

The protein belongs to the TolB family. As to quaternary structure, the Tol-Pal system is composed of five core proteins: the inner membrane proteins TolA, TolQ and TolR, the periplasmic protein TolB and the outer membrane protein Pal. They form a network linking the inner and outer membranes and the peptidoglycan layer.

It is found in the periplasm. Part of the Tol-Pal system, which plays a role in outer membrane invagination during cell division and is important for maintaining outer membrane integrity. In Rickettsia peacockii (strain Rustic), this protein is Tol-Pal system protein TolB.